Consider the following 210-residue polypeptide: Large ribosomal subunit protein uL3 (210 aa).

Residues 126-150 (VSATHGSHRNHRKPGSVGASSTPSR) form a disordered region.

Belongs to the universal ribosomal protein uL3 family. Part of the 50S ribosomal subunit. Forms a cluster with proteins L14 and L19.

Functionally, one of the primary rRNA binding proteins, it binds directly near the 3'-end of the 23S rRNA, where it nucleates assembly of the 50S subunit. This is Large ribosomal subunit protein uL3 from Tropheryma whipplei (strain TW08/27) (Whipple's bacillus).